Reading from the N-terminus, the 444-residue chain is Tol-Pal system protein TolB (444 aa).

The first 19 residues, 1 to 19 (MRNIIYFILSLLFSVTSYA), serve as a signal peptide directing secretion.

The protein belongs to the TolB family. In terms of assembly, the Tol-Pal system is composed of five core proteins: the inner membrane proteins TolA, TolQ and TolR, the periplasmic protein TolB and the outer membrane protein Pal. They form a network linking the inner and outer membranes and the peptidoglycan layer.

It is found in the periplasm. Functionally, part of the Tol-Pal system, which plays a role in outer membrane invagination during cell division and is important for maintaining outer membrane integrity. This Rickettsia africae (strain ESF-5) protein is Tol-Pal system protein TolB.